The primary structure comprises 210 residues: MTKGILGRKIGMTQVFAENGELIPVTVIAANPNVVLQKKTTETDGYNAIQLGFEDKREKLTNKPEQGHTAKASTTPKRFIREIRDADVDGLEVGQEVKVDVFATGEIVDVTGISKGKGFQGVIKRHGQSRGPMSHGSRYHRRPGSMGPVAPNRVFKGKKLAGRMGGDQVTIQNLEIVQVDTERNLLLVKGNVPGAKKSLVVVQGAVKVTQ.

A disordered region spans residues 125-151 (RHGQSRGPMSHGSRYHRRPGSMGPVAP).

Belongs to the universal ribosomal protein uL3 family. As to quaternary structure, part of the 50S ribosomal subunit. Forms a cluster with proteins L14 and L19.

Functionally, one of the primary rRNA binding proteins, it binds directly near the 3'-end of the 23S rRNA, where it nucleates assembly of the 50S subunit. This chain is Large ribosomal subunit protein uL3, found in Bacillus cereus (strain ATCC 14579 / DSM 31 / CCUG 7414 / JCM 2152 / NBRC 15305 / NCIMB 9373 / NCTC 2599 / NRRL B-3711).